We begin with the raw amino-acid sequence, 202 residues long: Small ribosomal subunit protein uS4c (202 aa).

Residues 90-153 form the S4 RNA-binding domain; it reads MRLDNIIFRL…KSETIISKNI (64 aa).

It belongs to the universal ribosomal protein uS4 family. Part of the 30S ribosomal subunit. Contacts protein S5. The interaction surface between S4 and S5 is involved in control of translational fidelity.

The protein resides in the plastid. Its subcellular location is the chloroplast. In terms of biological role, one of the primary rRNA binding proteins, it binds directly to 16S rRNA where it nucleates assembly of the body of the 30S subunit. With S5 and S12 plays an important role in translational accuracy. This Catharomnion ciliatum (Moss) protein is Small ribosomal subunit protein uS4c (rps4).